Here is a 245-residue protein sequence, read N- to C-terminus: 3-dehydroquinate dehydratase (245 aa).

3-dehydroquinate contacts are provided by residues 35–37 (EFR) and arginine 70. The Proton donor/acceptor role is filled by histidine 132. The active-site Schiff-base intermediate with substrate is lysine 158. Arginine 199, threonine 220, and glutamine 224 together coordinate 3-dehydroquinate.

It belongs to the type-I 3-dehydroquinase family. As to quaternary structure, homodimer.

It carries out the reaction 3-dehydroquinate = 3-dehydroshikimate + H2O. It functions in the pathway metabolic intermediate biosynthesis; chorismate biosynthesis; chorismate from D-erythrose 4-phosphate and phosphoenolpyruvate: step 3/7. In terms of biological role, involved in the third step of the chorismate pathway, which leads to the biosynthesis of aromatic amino acids. Catalyzes the cis-dehydration of 3-dehydroquinate (DHQ) and introduces the first double bond of the aromatic ring to yield 3-dehydroshikimate. In Haloquadratum walsbyi (strain DSM 16790 / HBSQ001), this protein is 3-dehydroquinate dehydratase.